The sequence spans 88 residues: MLNTTFDQYLEFPCSFPFKVVGDASETLADRVVAVVQQHAPGDYSPTSKVSSKGTYLSVTIRVTVTSKDHIETLYTSLAAIEGVKRVL.

This sequence belongs to the UPF0250 family.

This is UPF0250 protein Sama_2593 from Shewanella amazonensis (strain ATCC BAA-1098 / SB2B).